The following is a 366-amino-acid chain: 2-aminoethylphosphonate--pyruvate transaminase (366 aa).

At Lys-194 the chain carries N6-(pyridoxal phosphate)lysine.

Belongs to the class-V pyridoxal-phosphate-dependent aminotransferase family. PhnW subfamily. In terms of assembly, homodimer. Requires pyridoxal 5'-phosphate as cofactor.

It carries out the reaction (2-aminoethyl)phosphonate + pyruvate = phosphonoacetaldehyde + L-alanine. Its function is as follows. Involved in phosphonate degradation. This is 2-aminoethylphosphonate--pyruvate transaminase from Lactiplantibacillus plantarum (strain ATCC BAA-793 / NCIMB 8826 / WCFS1) (Lactobacillus plantarum).